A 492-amino-acid chain; its full sequence is Cysteine--tRNA ligase (492 aa).

C27 lines the Zn(2+) pocket. The 'HIGH' region signature appears at 29 to 39; that stretch reads VTVYDLCHLGH. Zn(2+) contacts are provided by C211, H236, and E240. The 'KMSKS' region motif lies at 268 to 272; that stretch reads KMSKS. K271 provides a ligand contact to ATP.

Belongs to the class-I aminoacyl-tRNA synthetase family. Monomer. It depends on Zn(2+) as a cofactor.

The protein resides in the cytoplasm. The enzyme catalyses tRNA(Cys) + L-cysteine + ATP = L-cysteinyl-tRNA(Cys) + AMP + diphosphate. This Prochlorococcus marinus subsp. pastoris (strain CCMP1986 / NIES-2087 / MED4) protein is Cysteine--tRNA ligase.